Reading from the N-terminus, the 547-residue chain is Glucose-6-phosphate isomerase (547 aa).

Glutamate 353 serves as the catalytic Proton donor. Active-site residues include histidine 384 and lysine 512.

Belongs to the GPI family.

It localises to the cytoplasm. It carries out the reaction alpha-D-glucose 6-phosphate = beta-D-fructose 6-phosphate. It functions in the pathway carbohydrate biosynthesis; gluconeogenesis. The protein operates within carbohydrate degradation; glycolysis; D-glyceraldehyde 3-phosphate and glycerone phosphate from D-glucose: step 2/4. In terms of biological role, catalyzes the reversible isomerization of glucose-6-phosphate to fructose-6-phosphate. The chain is Glucose-6-phosphate isomerase from Campylobacter jejuni subsp. doylei (strain ATCC BAA-1458 / RM4099 / 269.97).